Here is a 153-residue protein sequence, read N- to C-terminus: 6,7-dimethyl-8-ribityllumazine synthase 1 (153 aa).

5-amino-6-(D-ribitylamino)uracil is bound by residues phenylalanine 16, 47–49 (ALE), and 76–78 (MVI). Residue 81-82 (ET) participates in (2S)-2-hydroxy-3-oxobutyl phosphate binding. The active-site Proton donor is the histidine 84. Asparagine 109 contacts 5-amino-6-(D-ribitylamino)uracil. Arginine 123 is a (2S)-2-hydroxy-3-oxobutyl phosphate binding site.

Belongs to the DMRL synthase family.

The catalysed reaction is (2S)-2-hydroxy-3-oxobutyl phosphate + 5-amino-6-(D-ribitylamino)uracil = 6,7-dimethyl-8-(1-D-ribityl)lumazine + phosphate + 2 H2O + H(+). It functions in the pathway cofactor biosynthesis; riboflavin biosynthesis; riboflavin from 2-hydroxy-3-oxobutyl phosphate and 5-amino-6-(D-ribitylamino)uracil: step 1/2. Catalyzes the formation of 6,7-dimethyl-8-ribityllumazine by condensation of 5-amino-6-(D-ribitylamino)uracil with 3,4-dihydroxy-2-butanone 4-phosphate. This is the penultimate step in the biosynthesis of riboflavin. In Rhizobium meliloti (strain 1021) (Ensifer meliloti), this protein is 6,7-dimethyl-8-ribityllumazine synthase 1.